Here is a 230-residue protein sequence, read N- to C-terminus: Sodium channel modifier 1 (230 aa).

Position 2 is a phosphoserine (Ser-2). Residues 4–20 carry the Bipartite nuclear localization signal motif; sequence KREGDDWSQLNVLKKRR. Residues 42–74 form a Matrin-type zinc finger; sequence FACAICPHRPVLDTLAMLTAHRAGKKHLSSLQL. A Glycyl lysine isopeptide (Lys-Gly) (interchain with G-Cter in SUMO2) cross-link involves residue Lys-67. 2 disordered regions span residues 76-106 and 129-191; these read YGKKPPGKGTEQNPRQHNELRREETTAEAPL and RRKY…RALD. Positions 89-100 are enriched in basic and acidic residues; that stretch reads PRQHNELRREET. Pro residues predominate over residues 142–151; the sequence is SRPPLPPPEV. Positions 167–180 are enriched in polar residues; sequence GSQTKESATVSSPA. Ser-183 and Ser-219 each carry phosphoserine. The required for interaction with LUC7L2 stretch occupies residues 188–230; that stretch reads RALDHYLTLRSSGWIPDGRGRWIKDENVEFDSDEEEPPDLPLD.

Component of the minor spliceosome. Within this complex, interacts with RNF113A, as well as with SF3B1/SF3b155, SF3B2/SF3b145, SF3B3/SF3b130 and CDC5L. May interact with LUC7L2 and SNRNP70.

It localises to the nucleus. Its subcellular location is the nucleoplasm. The protein resides in the nucleus speckle. As a component of the minor spliceosome, involved in the splicing of U12-type introns in pre-mRNAs. Plays a role in the regulation of primary cilia length and Hedgehog signaling. The sequence is that of Sodium channel modifier 1 (SCNM1) from Bos taurus (Bovine).